The following is a 393-amino-acid chain: Formate-dependent phosphoribosylglycinamide formyltransferase (393 aa).

N(1)-(5-phospho-beta-D-ribosyl)glycinamide-binding positions include 22–23 (EL) and glutamate 82. ATP is bound by residues arginine 114, lysine 155, 160–165 (SSGKGQ), 195–198 (EGFI), and glutamate 203. Positions 119-308 (RLAAEELKLP…QFALHARAIL (190 aa)) constitute an ATP-grasp domain. Positions 267 and 279 each coordinate Mg(2+). Residues aspartate 286, lysine 356, and 363 to 364 (RR) each bind N(1)-(5-phospho-beta-D-ribosyl)glycinamide.

It belongs to the PurK/PurT family. As to quaternary structure, homodimer.

The enzyme catalyses N(1)-(5-phospho-beta-D-ribosyl)glycinamide + formate + ATP = N(2)-formyl-N(1)-(5-phospho-beta-D-ribosyl)glycinamide + ADP + phosphate + H(+). The protein operates within purine metabolism; IMP biosynthesis via de novo pathway; N(2)-formyl-N(1)-(5-phospho-D-ribosyl)glycinamide from N(1)-(5-phospho-D-ribosyl)glycinamide (formate route): step 1/1. Its function is as follows. Involved in the de novo purine biosynthesis. Catalyzes the transfer of formate to 5-phospho-ribosyl-glycinamide (GAR), producing 5-phospho-ribosyl-N-formylglycinamide (FGAR). Formate is provided by PurU via hydrolysis of 10-formyl-tetrahydrofolate. The polypeptide is Formate-dependent phosphoribosylglycinamide formyltransferase (Pseudomonas savastanoi pv. phaseolicola (strain 1448A / Race 6) (Pseudomonas syringae pv. phaseolicola (strain 1448A / Race 6))).